The chain runs to 374 residues: PqqA peptide cyclase (374 aa).

Residues 4 to 224 (IEPPMGLLAE…ERLKGVMVID (221 aa)) form the Radical SAM core domain. Positions 18, 22, and 25 each coordinate [4Fe-4S] cluster.

Belongs to the radical SAM superfamily. PqqE family. As to quaternary structure, interacts with PqqD. The interaction is necessary for activity of PqqE. [4Fe-4S] cluster serves as cofactor.

The catalysed reaction is [PQQ precursor protein] + S-adenosyl-L-methionine = E-Y cross-linked-[PQQ precursor protein] + 5'-deoxyadenosine + L-methionine + H(+). The protein operates within cofactor biosynthesis; pyrroloquinoline quinone biosynthesis. Catalyzes the cross-linking of a glutamate residue and a tyrosine residue in the PqqA protein as part of the biosynthesis of pyrroloquinoline quinone (PQQ). This is PqqA peptide cyclase from Granulibacter bethesdensis (strain ATCC BAA-1260 / CGDNIH1).